Here is a 1276-residue protein sequence, read N- to C-terminus: cGMP-specific 3',5'-cyclic phosphodiesterase (1276 aa).

Disordered regions lie at residues 1 to 76, 91 to 185, and 241 to 260; these read MHEL…TAAG, NQVK…QQDV, and ASPT…SASS. Low complexity-rich tracts occupy residues 12–47 and 57–76; these read SSSS…SSAS and TSTA…TAAG. Over residues 109 to 124 the composition is skewed to pro residues; that stretch reads APYPPVPAAKPKPTPT. Over residues 129–140 the composition is skewed to basic and acidic residues; it reads SKFKSTSREVDV. The segment covering 147 to 166 has biased composition (polar residues); that stretch reads ARSSTISPGVSIHTQTIQQE. Composition is skewed to low complexity over residues 167-180 and 249-260; these read SSSA…SSSS and SPRSLSNSSASS. GAF domains follow at residues 290–442 and 474–658; these read DIDV…GIGI and NLEC…GLGI. The region spanning 688–1119 is the PDEase domain; the sequence is SQDQTEKLTQ…RNWQDLAEKV (432 aa). Histidine 764 functions as the Proton donor in the catalytic mechanism. Histidine 768, histidine 804, aspartate 805, and aspartate 1023 together coordinate a divalent metal cation. 2 disordered regions span residues 1162 to 1193 and 1205 to 1276; these read AQHG…TGAL and LYNS…CSLL. Basic and acidic residues-rich tracts occupy residues 1171 to 1180 and 1221 to 1233; these read DDSHTPEHQR and LESH…DDKS. The segment covering 1248-1263 has biased composition (low complexity); the sequence is GRMSASSSTSSAGTVV. Residues 1266-1276 are compositionally biased toward basic residues; it reads SKKRSKLCSLL. A Cysteine methyl ester modification is found at cysteine 1273. Cysteine 1273 carries S-farnesyl cysteine lipidation. Positions 1274–1276 are cleaved as a propeptide — removed in mature form; that stretch reads SLL.

Belongs to the cyclic nucleotide phosphodiesterase family. Interacts with PrBP. Requires a divalent metal cation as cofactor.

Its subcellular location is the cell membrane. The catalysed reaction is 3',5'-cyclic GMP + H2O = GMP + H(+). Functionally, has a role regulating cGMP transport in Malpighian tubule principal cells. The protein is cGMP-specific 3',5'-cyclic phosphodiesterase of Drosophila persimilis (Fruit fly).